The chain runs to 445 residues: Rab GDP dissociation inhibitor beta (445 aa).

N-acetylmethionine is present on methionine 1. Lysine 57 bears the N6-succinyllysine mark. Lysine 112 bears the N6-acetyllysine mark. Serine 130 is subject to Phosphoserine. Position 269 is an N6-acetyllysine (lysine 269). Serine 382 carries the phosphoserine modification.

Belongs to the Rab GDI family. As to quaternary structure, interacts with RHOH. Interacts with the GDP-bound inactive forms of RAB3A, RAB3B, RAB3C, RAB5A, RAB5B, RAB5C, RAB8A, RAB8B, RAB10, RAB12, RAB35, and RAB43; binds RAB3D to a lesser extent. Interacts with DZIP1; this interaction negatively regulates the interaction of GDI2 with GDP-bound RAB8A. Ubiquitously expressed.

It is found in the cytoplasm. Its subcellular location is the membrane. It localises to the golgi apparatus. The protein resides in the trans-Golgi network. Functionally, GDP-dissociation inhibitor preventing the GDP to GTP exchange of most Rab proteins. By keeping these small GTPases in their inactive GDP-bound form regulates intracellular membrane trafficking. Negatively regulates protein transport to the cilium and ciliogenesis through the inhibition of RAB8A. The chain is Rab GDP dissociation inhibitor beta (Gdi2) from Rattus norvegicus (Rat).